Reading from the N-terminus, the 317-residue chain is Homoserine O-acetyltransferase (317 aa).

Catalysis depends on C142, which acts as the Acyl-thioester intermediate. Substrate-binding residues include K163 and S192. H235 functions as the Proton acceptor in the catalytic mechanism. E237 is a catalytic residue. R249 serves as a coordination point for substrate.

The protein belongs to the MetA family.

Its subcellular location is the cytoplasm. The enzyme catalyses L-homoserine + acetyl-CoA = O-acetyl-L-homoserine + CoA. The protein operates within amino-acid biosynthesis; L-methionine biosynthesis via de novo pathway; O-acetyl-L-homoserine from L-homoserine: step 1/1. Its function is as follows. Transfers an acetyl group from acetyl-CoA to L-homoserine, forming acetyl-L-homoserine. The protein is Homoserine O-acetyltransferase of Rhizorhabdus wittichii (strain DSM 6014 / CCUG 31198 / JCM 15750 / NBRC 105917 / EY 4224 / RW1) (Sphingomonas wittichii).